A 131-amino-acid chain; its full sequence is Holo-[acyl-carrier-protein] synthase (131 aa).

Aspartate 8 and glutamate 59 together coordinate Mg(2+).

Belongs to the P-Pant transferase superfamily. AcpS family. Mg(2+) serves as cofactor.

Its subcellular location is the cytoplasm. It catalyses the reaction apo-[ACP] + CoA = holo-[ACP] + adenosine 3',5'-bisphosphate + H(+). Its function is as follows. Transfers the 4'-phosphopantetheine moiety from coenzyme A to a Ser of acyl-carrier-protein. The polypeptide is Holo-[acyl-carrier-protein] synthase (Orientia tsutsugamushi (strain Boryong) (Rickettsia tsutsugamushi)).